Here is a 280-residue protein sequence, read N- to C-terminus: MTAALPDLSFHPAWHAQLELAYARAGDATRPVTRRHAGPLRVQKHLYAEGPEVCQHILVHPPGGIAGGDSLAFDVRLGERAWAQLTSPGAAKWYRAACPARQTLEIHLEPGATLEWLPQESIVFAGAQAELETRIQLRGDARLFYWDMVALGRPASGERFASGHFVAALDIRRDDRLLWHERQRIDGGDRLLDSPIGLAGHPVLATLVASGEIDTDLLQRCRALPCAGRGNLSQLPGGLLVARCLADEALHARAWLIELWRLLRPALLGREAVPPRIWST.

The protein belongs to the UreD family. As to quaternary structure, ureD, UreF and UreG form a complex that acts as a GTP-hydrolysis-dependent molecular chaperone, activating the urease apoprotein by helping to assemble the nickel containing metallocenter of UreC. The UreE protein probably delivers the nickel.

It is found in the cytoplasm. Required for maturation of urease via the functional incorporation of the urease nickel metallocenter. This Pseudomonas aeruginosa (strain ATCC 15692 / DSM 22644 / CIP 104116 / JCM 14847 / LMG 12228 / 1C / PRS 101 / PAO1) protein is Urease accessory protein UreD.